The following is a 554-amino-acid chain: CTP synthase (554 aa).

Positions methionine 1–leucine 279 are amidoligase domain. Serine 21 provides a ligand contact to CTP. UTP is bound at residue serine 21. Residues serine 22–leucine 27 and aspartate 79 contribute to the ATP site. Mg(2+)-binding residues include aspartate 79 and glutamate 153. CTP contacts are provided by residues aspartate 160–glutamate 162, lysine 200–glutamine 205, and lysine 236. UTP is bound by residues lysine 200–glutamine 205 and lysine 236. Positions threonine 304 to histidine 553 constitute a Glutamine amidotransferase type-1 domain. Glycine 367 provides a ligand contact to L-glutamine. Catalysis depends on cysteine 394, which acts as the Nucleophile; for glutamine hydrolysis. Residues leucine 395–glutamine 398, glutamate 417, and arginine 478 contribute to the L-glutamine site. Residues histidine 526 and glutamate 528 contribute to the active site.

This sequence belongs to the CTP synthase family. As to quaternary structure, homotetramer.

The catalysed reaction is UTP + L-glutamine + ATP + H2O = CTP + L-glutamate + ADP + phosphate + 2 H(+). It carries out the reaction L-glutamine + H2O = L-glutamate + NH4(+). It catalyses the reaction UTP + NH4(+) + ATP = CTP + ADP + phosphate + 2 H(+). It participates in pyrimidine metabolism; CTP biosynthesis via de novo pathway; CTP from UDP: step 2/2. With respect to regulation, allosterically activated by GTP, when glutamine is the substrate; GTP has no effect on the reaction when ammonia is the substrate. The allosteric effector GTP functions by stabilizing the protein conformation that binds the tetrahedral intermediate(s) formed during glutamine hydrolysis. Inhibited by the product CTP, via allosteric rather than competitive inhibition. In terms of biological role, catalyzes the ATP-dependent amination of UTP to CTP with either L-glutamine or ammonia as the source of nitrogen. Regulates intracellular CTP levels through interactions with the four ribonucleotide triphosphates. This is CTP synthase from Corynebacterium glutamicum (strain R).